A 412-amino-acid chain; its full sequence is Multifunctional CCA protein (412 aa).

ATP contacts are provided by Gly-8 and Arg-11. 2 residues coordinate CTP: Gly-8 and Arg-11. Mg(2+)-binding residues include Glu-21 and Asp-23. The ATP site is built by Arg-91, Arg-137, and Arg-140. Residues Arg-91, Arg-137, and Arg-140 each contribute to the CTP site. The HD domain maps to Cys-228–Leu-329.

The protein belongs to the tRNA nucleotidyltransferase/poly(A) polymerase family. Bacterial CCA-adding enzyme type 1 subfamily. In terms of assembly, monomer. Can also form homodimers and oligomers. Mg(2+) is required as a cofactor. The cofactor is Ni(2+).

It catalyses the reaction a tRNA precursor + 2 CTP + ATP = a tRNA with a 3' CCA end + 3 diphosphate. The catalysed reaction is a tRNA with a 3' CCA end + 2 CTP + ATP = a tRNA with a 3' CCACCA end + 3 diphosphate. In terms of biological role, catalyzes the addition and repair of the essential 3'-terminal CCA sequence in tRNAs without using a nucleic acid template. Adds these three nucleotides in the order of C, C, and A to the tRNA nucleotide-73, using CTP and ATP as substrates and producing inorganic pyrophosphate. tRNA 3'-terminal CCA addition is required both for tRNA processing and repair. Also involved in tRNA surveillance by mediating tandem CCA addition to generate a CCACCA at the 3' terminus of unstable tRNAs. While stable tRNAs receive only 3'-terminal CCA, unstable tRNAs are marked with CCACCA and rapidly degraded. The protein is Multifunctional CCA protein of Acinetobacter baumannii (strain SDF).